The primary structure comprises 467 residues: MTEVFTIKQCLDGEISIDETVTVRGWVKTRRDSKAGLSFISLHDGSCFSPIQIVATDQLSNYHKEVTKLTAGCSMVATGKLVASQGKGQFFEIQAESIEVVGWVENPDTYPIQAKRHTLEFLREVAHLRPRTNTISAVTRVRHSLAQAIHRFYHEQGFFWVHTPIITASDCEGAGEMFRVSTLDLLNIPKNDKGQIDFSKDFFGRETFLTVSGQLNVEAYCMAMSKVYTFGPTFRAENSNTSRHLAEFWMIEPEIAFANLEDICKLSQSMLRYLCKTVLEERADDMDFFNQFVAPGCIERMEHIADSEFEMMTYTDAIKALEASDQKFEFPVSWGLDLQSEHERYLAEVLCKKPVIVTNYPQEIKGFYMRLNDDGKTVAAMDVLAPGIGEIIGGSQREERLEILDRRMDECNLNKEHYQWYRDLRRYGTVPHAGFGLGFERLISYVTGVSNVRDVIPFPRTPGHADY.

The protein belongs to the class-II aminoacyl-tRNA synthetase family. Homodimer.

It localises to the cytoplasm. The enzyme catalyses tRNA(Asn) + L-asparagine + ATP = L-asparaginyl-tRNA(Asn) + AMP + diphosphate + H(+). The polypeptide is Asparagine--tRNA ligase (Legionella pneumophila (strain Corby)).